We begin with the raw amino-acid sequence, 332 residues long: Adenosine receptor A2b (332 aa).

Over methionine 1 to alanine 8 the chain is Extracellular. Residues leucine 9–glycine 33 form a helical membrane-spanning segment. At alanine 34–asparagine 43 the chain is on the cytoplasmic side. Residues tyrosine 44–isoleucine 67 traverse the membrane as a helical segment. Residues serine 68 to cysteine 78 lie on the Extracellular side of the membrane. Cysteine 78 and cysteine 171 are joined by a disulfide. A helical transmembrane segment spans residues leucine 79–valine 101. Residues aspartate 102–arginine 121 are Cytoplasmic-facing. A helical membrane pass occupies residues alanine 122–tryptophan 144. The Extracellular segment spans residues asparagine 145–proline 178. Asparagine 153 and asparagine 163 each carry an N-linked (GlcNAc...) asparagine glycan. Residue glutamate 174 coordinates adenosine. The helical transmembrane segment at methionine 179 to isoleucine 203 threads the bilayer. Over lysine 204–serine 235 the chain is Cytoplasmic. Residues leucine 236–phenylalanine 259 traverse the membrane as a helical segment. Asparagine 254 lines the adenosine pocket. At histidine 260 to lysine 267 the chain is on the extracellular side. Residues proline 268–alanine 291 traverse the membrane as a helical segment. Serine 279 and histidine 280 together coordinate adenosine. Residues tyrosine 292 to leucine 332 lie on the Cytoplasmic side of the membrane. A lipid anchor (S-palmitoyl cysteine) is attached at cysteine 311.

The protein belongs to the G-protein coupled receptor 1 family.

It localises to the cell membrane. In terms of biological role, receptor for adenosine. The activity of this receptor is mediated by G proteins which activate adenylyl cyclase. This Mus musculus (Mouse) protein is Adenosine receptor A2b (Adora2b).